The chain runs to 244 residues: MNKSALVTGASRGIGRSIALQLAEEGYNVAVNYAGSKDKAEAVVEEIKAKGVESFAIQANVAKGDEVKEMIKEVVSQFGSVDVLVNNAGITKDNLLMRMKEQEWDDVIDTNLKGVFNCIQKVTPQMLRQRSGAIINLTSIVGAMGNPGQANYVATKAGVIGLTKTAARELASRGITVNAVAPGFIVSDMTNALSDDLKDQMLEQIPLKRFGEDTDIANTVAFLASDKAKYITGQTIHVNGGMYM.

NADP(+) is bound by residues 9–12, 60–61, and Asn-87; these read GASR and NV. Residue Ser-139 participates in substrate binding. Tyr-152 serves as the catalytic Proton acceptor. NADP(+) contacts are provided by residues 152-156 and Ile-185; that span reads YVATK.

Belongs to the short-chain dehydrogenases/reductases (SDR) family. In terms of assembly, homotetramer.

It carries out the reaction a (3R)-hydroxyacyl-[ACP] + NADP(+) = a 3-oxoacyl-[ACP] + NADPH + H(+). It functions in the pathway lipid metabolism; fatty acid biosynthesis. Functionally, catalyzes the NADPH-dependent reduction of beta-ketoacyl-ACP substrates to beta-hydroxyacyl-ACP products, the first reductive step in the elongation cycle of fatty acid biosynthesis. The chain is 3-oxoacyl-[acyl-carrier-protein] reductase FabG (fabG) from Staphylococcus epidermidis (strain ATCC 35984 / DSM 28319 / BCRC 17069 / CCUG 31568 / BM 3577 / RP62A).